We begin with the raw amino-acid sequence, 59 residues long: Large ribosomal subunit protein bL32 (59 aa).

This sequence belongs to the bacterial ribosomal protein bL32 family.

This is Large ribosomal subunit protein bL32 from Anaeromyxobacter dehalogenans (strain 2CP-C).